Consider the following 371-residue polypeptide: Queuine tRNA-ribosyltransferase (371 aa).

D89 functions as the Proton acceptor in the catalytic mechanism. Substrate-binding positions include 89-93, D143, Q185, and G212; that span reads DSGGF. The segment at 243–249 is RNA binding; that stretch reads GVGTPED. The active-site Nucleophile is D262. The interval 267-271 is RNA binding; important for wobble base 34 recognition; the sequence is TRNAR. Zn(2+) contacts are provided by C300, C302, C305, and H331.

Belongs to the queuine tRNA-ribosyltransferase family. In terms of assembly, homodimer. Within each dimer, one monomer is responsible for RNA recognition and catalysis, while the other monomer binds to the replacement base PreQ1. Requires Zn(2+) as cofactor.

The enzyme catalyses 7-aminomethyl-7-carbaguanine + guanosine(34) in tRNA = 7-aminomethyl-7-carbaguanosine(34) in tRNA + guanine. The protein operates within tRNA modification; tRNA-queuosine biosynthesis. Catalyzes the base-exchange of a guanine (G) residue with the queuine precursor 7-aminomethyl-7-deazaguanine (PreQ1) at position 34 (anticodon wobble position) in tRNAs with GU(N) anticodons (tRNA-Asp, -Asn, -His and -Tyr). Catalysis occurs through a double-displacement mechanism. The nucleophile active site attacks the C1' of nucleotide 34 to detach the guanine base from the RNA, forming a covalent enzyme-RNA intermediate. The proton acceptor active site deprotonates the incoming PreQ1, allowing a nucleophilic attack on the C1' of the ribose to form the product. After dissociation, two additional enzymatic reactions on the tRNA convert PreQ1 to queuine (Q), resulting in the hypermodified nucleoside queuosine (7-(((4,5-cis-dihydroxy-2-cyclopenten-1-yl)amino)methyl)-7-deazaguanosine). The sequence is that of Queuine tRNA-ribosyltransferase from Nitrosomonas europaea (strain ATCC 19718 / CIP 103999 / KCTC 2705 / NBRC 14298).